We begin with the raw amino-acid sequence, 101 residues long: Small ribosomal subunit protein uS14 (101 aa).

The interval 46–72 is disordered; sequence FELNRQPRDASPVRVRNRDSRDGRPRG. Residues 61-70 are compositionally biased toward basic and acidic residues; the sequence is RNRDSRDGRP.

It belongs to the universal ribosomal protein uS14 family. Part of the 30S ribosomal subunit. Contacts proteins S3 and S10.

Functionally, binds 16S rRNA, required for the assembly of 30S particles and may also be responsible for determining the conformation of the 16S rRNA at the A site. The protein is Small ribosomal subunit protein uS14 of Corynebacterium diphtheriae (strain ATCC 700971 / NCTC 13129 / Biotype gravis).